The primary structure comprises 540 residues: Glucose-6-phosphate isomerase (540 aa).

Glu-351 acts as the Proton donor in catalysis. Active-site residues include His-382 and Lys-506.

This sequence belongs to the GPI family.

Its subcellular location is the cytoplasm. It carries out the reaction alpha-D-glucose 6-phosphate = beta-D-fructose 6-phosphate. It functions in the pathway carbohydrate biosynthesis; gluconeogenesis. It participates in carbohydrate degradation; glycolysis; D-glyceraldehyde 3-phosphate and glycerone phosphate from D-glucose: step 2/4. Its function is as follows. Catalyzes the reversible isomerization of glucose-6-phosphate to fructose-6-phosphate. The protein is Glucose-6-phosphate isomerase of Corynebacterium glutamicum (strain R).